The primary structure comprises 596 residues: Elongation factor 4 (596 aa).

Residues 2 to 184 (KHIRNFSIIA…VIVEQIPPPE (183 aa)) enclose the tr-type G domain. Residues 14 to 19 (DHGKST) and 131 to 134 (NKID) each bind GTP.

The protein belongs to the TRAFAC class translation factor GTPase superfamily. Classic translation factor GTPase family. LepA subfamily.

The protein resides in the cell inner membrane. It carries out the reaction GTP + H2O = GDP + phosphate + H(+). In terms of biological role, required for accurate and efficient protein synthesis under certain stress conditions. May act as a fidelity factor of the translation reaction, by catalyzing a one-codon backward translocation of tRNAs on improperly translocated ribosomes. Back-translocation proceeds from a post-translocation (POST) complex to a pre-translocation (PRE) complex, thus giving elongation factor G a second chance to translocate the tRNAs correctly. Binds to ribosomes in a GTP-dependent manner. The protein is Elongation factor 4 of Shewanella pealeana (strain ATCC 700345 / ANG-SQ1).